We begin with the raw amino-acid sequence, 319 residues long: Epoxyqueuosine reductase (319 aa).

Aspartate 128 functions as the Proton donor in the catalytic mechanism. The 4Fe-4S ferredoxin-type domain occupies 173–202 (EANDPHPNYCGTCTRCLSACPTAALVEPAV). Residues cysteine 182, cysteine 185, cysteine 188, cysteine 192, cysteine 208, cysteine 236, cysteine 239, and cysteine 243 each coordinate [4Fe-4S] cluster.

It belongs to the QueG family. In terms of assembly, monomer. Requires cob(II)alamin as cofactor. [4Fe-4S] cluster serves as cofactor.

Its subcellular location is the cytoplasm. The catalysed reaction is epoxyqueuosine(34) in tRNA + AH2 = queuosine(34) in tRNA + A + H2O. It participates in tRNA modification; tRNA-queuosine biosynthesis. Catalyzes the conversion of epoxyqueuosine (oQ) to queuosine (Q), which is a hypermodified base found in the wobble positions of tRNA(Asp), tRNA(Asn), tRNA(His) and tRNA(Tyr). This is Epoxyqueuosine reductase from Gloeobacter violaceus (strain ATCC 29082 / PCC 7421).